Here is an 864-residue protein sequence, read N- to C-terminus: Seed linoleate 9S-lipoxygenase (864 aa).

Residues 44-171 form the PLAT domain; sequence LGQGVSLVGG…SYKKNRIFFV (128 aa). The region spanning 174-864 is the Lipoxygenase domain; it reads TYLPSATPAP…FKGIPNSISI (691 aa). The disordered stretch occupies residues 244–264; sequence TGRERTRTDPNSEKPGEVYVP. The Fe cation site is built by H525, H530, H716, N720, and I864.

The protein belongs to the lipoxygenase family. Monomer. The cofactor is Fe cation. Germinated cotyledons.

It localises to the cytoplasm. The enzyme catalyses (9Z,12Z)-octadecadienoate + O2 = (9S)-hydroperoxy-(10E,12Z)-octadecadienoate. It participates in lipid metabolism; oxylipin biosynthesis. Plant lipoxygenase may be involved in a number of diverse aspects of plant physiology including growth and development, pest resistance, and senescence or responses to wounding. It catalyzes the hydroperoxidation of lipids containing a cis,cis-1,4-pentadiene structure. The protein is Seed linoleate 9S-lipoxygenase (LOX1.4) of Glycine max (Soybean).